A 365-amino-acid polypeptide reads, in one-letter code: Eukaryotic translation initiation factor 3 subunit H (365 aa).

Residues 11 to 160 form the MPN domain; sequence VQVEALVVMK…LRAFRLSPQF (150 aa). The stretch at 273-303 forms a coiled coil; sequence YQRSLAREQTKIAAWQAKRKAENATRAQLKQ.

The protein belongs to the eIF-3 subunit H family. Component of the eukaryotic translation initiation factor 3 (eIF-3) complex.

It localises to the cytoplasm. Component of the eukaryotic translation initiation factor 3 (eIF-3) complex, which is involved in protein synthesis of a specialized repertoire of mRNAs and, together with other initiation factors, stimulates binding of mRNA and methionyl-tRNAi to the 40S ribosome. The eIF-3 complex specifically targets and initiates translation of a subset of mRNAs involved in cell proliferation. The sequence is that of Eukaryotic translation initiation factor 3 subunit H from Coccidioides immitis (strain RS) (Valley fever fungus).